The primary structure comprises 366 residues: Neutral protease 2 homolog BDBG_02110 (366 aa).

An N-terminal signal peptide occupies residues 1–19; the sequence is MQLSSVLLTAAGLLAPVYS. The propeptide occupies 23–184; sequence ISIGRRSEGL…RAKIHDHLAQ (162 aa). Residues Asn123 and Asn192 are each glycosylated (N-linked (GlcNAc...) asparagine). Cys272 and Cys290 are oxidised to a cystine. His314 contacts Zn(2+). Residue Glu315 is part of the active site. A Zn(2+)-binding site is contributed by His318.

Belongs to the peptidase M35 family. Requires Zn(2+) as cofactor.

It is found in the secreted. It catalyses the reaction Preferential cleavage of bonds with hydrophobic residues in P1'. Also 3-Asn-|-Gln-4 and 8-Gly-|-Ser-9 bonds in insulin B chain.. Its function is as follows. Secreted metalloproteinase that allows assimilation of proteinaceous substrates. Shows high activities on basic nuclear substrates such as histone and protamine. This is Neutral protease 2 homolog BDBG_02110 from Blastomyces gilchristii (strain SLH14081) (Blastomyces dermatitidis).